Here is a 289-residue protein sequence, read N- to C-terminus: Arabinogalactan O-methyltransferase 1 (289 aa).

Residues 12-32 form a helical membrane-spanning segment; it reads IITGVLLAGLVGGALLFTSFI.

This sequence belongs to the methyltransferase superfamily. Binds to the translation initiation factors TIF3E1.

It is found in the golgi apparatus membrane. In terms of biological role, involved in the methylation of glucuronic acid of different plant cell wall component, but mainly on side chains of arabinogalactans. The sequence is that of Arabinogalactan O-methyltransferase 1 (AGM1) from Arabidopsis thaliana (Mouse-ear cress).